A 149-amino-acid polypeptide reads, in one-letter code: Large ribosomal subunit protein bL9 (149 aa).

It belongs to the bacterial ribosomal protein bL9 family.

Its function is as follows. Binds to the 23S rRNA. This is Large ribosomal subunit protein bL9 from Pasteurella multocida (strain Pm70).